The following is a 98-amino-acid chain: NADH-ubiquinone oxidoreductase chain 4L (98 aa).

3 consecutive transmembrane segments (helical) span residues 1 to 21 (MSMV…GMLV), 29 to 49 (SLLC…VTIL), and 61 to 81 (IVLL…LVMV).

The protein belongs to the complex I subunit 4L family. In terms of assembly, core subunit of respiratory chain NADH dehydrogenase (Complex I) which is composed of 45 different subunits.

The protein localises to the mitochondrion inner membrane. It catalyses the reaction a ubiquinone + NADH + 5 H(+)(in) = a ubiquinol + NAD(+) + 4 H(+)(out). Core subunit of the mitochondrial membrane respiratory chain NADH dehydrogenase (Complex I) which catalyzes electron transfer from NADH through the respiratory chain, using ubiquinone as an electron acceptor. Part of the enzyme membrane arm which is embedded in the lipid bilayer and involved in proton translocation. The sequence is that of NADH-ubiquinone oxidoreductase chain 4L (MT-ND4L) from Canis latrans (Coyote).